The following is a 444-amino-acid chain: Cerebral cavernous malformations 2 protein (444 aa).

Residues M1–T37 are disordered. S15 is modified (phosphoserine). The span at L22–T37 shows a compositional bias: basic and acidic residues. The PID domain maps to L59–S248. Phosphoserine is present on S164. The harmonin homology domain stretch occupies residues S283 to D376. Phosphoserine is present on residues S384 and S393. Positions A391 to R423 are disordered. A compositionally biased stretch (low complexity) spans L392–S408. T394 carries the phosphothreonine modification. A Phosphoserine modification is found at S396. Residue T399 is modified to Phosphothreonine.

Belongs to the CCM2 family. In terms of assembly, part of a complex with MAP2K3, MAP3K3 and RAC1. Binds RAC1 directly and independently of its nucleotide-bound state. Interacts with HEG1 and KRIT1; KRIT1 greatly facilitates the interaction with HEG1. Interacts with PDCD10.

It localises to the cytoplasm. Its function is as follows. Component of the CCM signaling pathway which is a crucial regulator of heart and vessel formation and integrity. May act through the stabilization of endothelial cell junctions. May function as a scaffold protein for MAP2K3-MAP3K3 signaling. Seems to play a major role in the modulation of MAP3K3-dependent p38 activation induced by hyperosmotic shock. This Homo sapiens (Human) protein is Cerebral cavernous malformations 2 protein (CCM2).